The sequence spans 640 residues: PAN2-PAN3 deadenylation complex subunit PAN3 (640 aa).

The C3H1-type zinc-finger motif lies at 17-46 (ENKDILCRNVLIYGHCRYEDQGCTYNHDQN). 2 stretches are compositionally biased toward polar residues: residues 43–53 (HDQNKNSSQPE) and 63–87 (DSPSFTPSGQSTVLPKKTTLSSQAA). The disordered stretch occupies residues 43-101 (HDQNKNSSQPEAPSKKMFNVDSPSFTPSGQSTVLPKKTTLSSQAASAAPFTPRGGGTPT). Positions 237 to 498 (QVIPNSGLPQ…TIEHFMTGIA (262 aa)) are pseudokinase domain. Residues Asn-263, Arg-288, 338 to 345 (DFHPLSKT), and 397 to 398 (SK) contribute to the ATP site. The stretch at 499–537 (SQMTTFFDLALQDNDEKLFHLAREVENGRIARSLMKLLT) forms a coiled coil. Positions 538–640 (ILERGDYDGV…SKTGAPGANT (103 aa)) are knob domain.

The protein belongs to the protein kinase superfamily. PAN3 family. Homodimer. Forms a heterotrimer with a catalytic subunit PAN2 to form the poly(A)-nuclease (PAN) deadenylation complex. Interacts (via PAM-2 motif) with poly(A)-binding protein PAB1 (via PABC domain), conferring substrate specificity of the enzyme complex.

It is found in the cytoplasm. Regulatory subunit of the poly(A)-nuclease (PAN) deadenylation complex, one of two cytoplasmic mRNA deadenylases involved in mRNA turnover. PAN specifically shortens poly(A) tails of RNA and the activity is stimulated by poly(A)-binding protein PAB1. PAN deadenylation is followed by rapid degradation of the shortened mRNA tails by the CCR4-NOT complex. Deadenylated mRNAs are then degraded by two alternative mechanisms, namely exosome-mediated 3'-5' exonucleolytic degradation, or deadenylation-dependent mRNA decaping and subsequent 5'-3' exonucleolytic degradation by XRN1. May also be involved in post-transcriptional maturation of mRNA poly(A) tails. PAN3 acts as a positive regulator for PAN activity, recruiting the catalytic subunit PAN2 to mRNA via its interaction with RNA and with PAB1. In Chaetomium thermophilum (strain DSM 1495 / CBS 144.50 / IMI 039719) (Thermochaetoides thermophila), this protein is PAN2-PAN3 deadenylation complex subunit PAN3.